Reading from the N-terminus, the 352-residue chain is Bifunctional protein FolD 1, mitochondrial (352 aa).

Residues Met1–Asp23 constitute a mitochondrion transit peptide.

It belongs to the tetrahydrofolate dehydrogenase/cyclohydrolase family. Homodimer.

The protein resides in the mitochondrion. The catalysed reaction is (6R)-5,10-methylene-5,6,7,8-tetrahydrofolate + NADP(+) = (6R)-5,10-methenyltetrahydrofolate + NADPH. The enzyme catalyses (6R)-5,10-methenyltetrahydrofolate + H2O = (6R)-10-formyltetrahydrofolate + H(+). It functions in the pathway one-carbon metabolism; tetrahydrofolate interconversion. In terms of biological role, catalyzes the oxidation of 5,10-methylenetetrahydrofolate to 5,10-methenyltetrahydrofolate and then the hydrolysis of 5,10-methenyltetrahydrofolate to 10-formyltetrahydrofolate. This is Bifunctional protein FolD 1, mitochondrial (FOLD1) from Arabidopsis thaliana (Mouse-ear cress).